The following is a 192-amino-acid chain: UPF0149 protein YgfB (192 aa).

The protein belongs to the UPF0149 family.

The sequence is that of UPF0149 protein YgfB from Salmonella agona (strain SL483).